Here is a 277-residue protein sequence, read N- to C-terminus: Putative acetylornithine deacetylase (277 aa).

It catalyses the reaction N(2)-acetyl-L-ornithine + H2O = L-ornithine + acetate. The protein operates within amino-acid biosynthesis; L-arginine biosynthesis; L-ornithine from N(2)-acetyl-L-ornithine (linear): step 1/1. The polypeptide is Putative acetylornithine deacetylase (argE) (Leptospira biflexa).